Reading from the N-terminus, the 294-residue chain is Golgi to ER traffic protein 2 (294 aa).

The interval 1-104 (MSSELSETEK…QATSPQETID (104 aa)) is disordered. The Cytoplasmic portion of the chain corresponds to 1–166 (MSSELSETEK…LDYNNYLINN (166 aa)). Residues 12 to 21 (KLIRERRQKK) show a composition bias toward basic residues. The segment covering 34–65 (ITGQAENSQLDTESPLDSKSSRETTPTVTKVD) has biased composition (polar residues). Residues 85-95 (KVEKSQKKKEQ) are compositionally biased toward basic and acidic residues. A helical transmembrane segment spans residues 167–187 (LKVWSIIFKWCFFLIPYLFAL). Residues 188–205 (TRSEPISFLPEQFSNPSN) lie on the Lumenal side of the membrane. Residues 206–225 (FFMIFLSFEIVATSIYFQKL) traverse the membrane as a helical segment. Residues 226–272 (QNIEKSNKINGFQSNNKIVNLVSLIPEGVLPVPDIKGKVIMALQYWD) lie on the Cytoplasmic side of the membrane. Residues 273–293 (VFSMFLTDICFVLVMMGLFKL) traverse the membrane as a helical segment. Residue Ile-294 is a topological domain, lumenal.

This sequence belongs to the GET2 family. In terms of assembly, component of the Golgi to ER traffic (GET) complex, which is composed of GET1, GET2 and GET3. Within the complex, GET1 and GET2 form a heterotetramer which is stabilized by phosphatidylinositol binding and which binds to the GET3 homodimer.

It localises to the endoplasmic reticulum membrane. The protein localises to the golgi apparatus membrane. Its function is as follows. Required for the post-translational delivery of tail-anchored (TA) proteins to the endoplasmic reticulum. Together with GET1, acts as a membrane receptor for soluble GET3, which recognizes and selectively binds the transmembrane domain of TA proteins in the cytosol. The GET complex cooperates with the HDEL receptor ERD2 to mediate the ATP-dependent retrieval of resident ER proteins that contain a C-terminal H-D-E-L retention signal from the Golgi to the ER. The polypeptide is Golgi to ER traffic protein 2 (Vanderwaltozyma polyspora (strain ATCC 22028 / DSM 70294 / BCRC 21397 / CBS 2163 / NBRC 10782 / NRRL Y-8283 / UCD 57-17) (Kluyveromyces polysporus)).